A 358-amino-acid polypeptide reads, in one-letter code: Histidinol-phosphate aminotransferase (358 aa).

Lys-218 carries the post-translational modification N6-(pyridoxal phosphate)lysine.

It belongs to the class-II pyridoxal-phosphate-dependent aminotransferase family. Histidinol-phosphate aminotransferase subfamily. As to quaternary structure, homodimer. Pyridoxal 5'-phosphate is required as a cofactor.

The catalysed reaction is L-histidinol phosphate + 2-oxoglutarate = 3-(imidazol-4-yl)-2-oxopropyl phosphate + L-glutamate. It participates in amino-acid biosynthesis; L-histidine biosynthesis; L-histidine from 5-phospho-alpha-D-ribose 1-diphosphate: step 7/9. This Dehalococcoides mccartyi (strain CBDB1) protein is Histidinol-phosphate aminotransferase.